The primary structure comprises 460 residues: UDP-N-acetylmuramate--L-alanine ligase (460 aa).

118–124 (GAHGKTT) provides a ligand contact to ATP.

The protein belongs to the MurCDEF family.

Its subcellular location is the cytoplasm. It carries out the reaction UDP-N-acetyl-alpha-D-muramate + L-alanine + ATP = UDP-N-acetyl-alpha-D-muramoyl-L-alanine + ADP + phosphate + H(+). It functions in the pathway cell wall biogenesis; peptidoglycan biosynthesis. Its function is as follows. Cell wall formation. This chain is UDP-N-acetylmuramate--L-alanine ligase, found in Clostridium botulinum (strain Eklund 17B / Type B).